Consider the following 129-residue polypeptide: UPF0325 protein SG1947 (129 aa).

This sequence belongs to the UPF0325 family.

The sequence is that of UPF0325 protein SG1947 from Sodalis glossinidius (strain morsitans).